The following is a 273-amino-acid chain: Proteasome subunit beta type-10 (273 aa).

Residue Met-1 is modified to N-acetylmethionine. Residues 1–39 (MLKQAVEHRGGFSFENCQRNASLEHVLPGLRVPLARKTG) constitute a propeptide, removed in mature form. Thr-40 functions as the Nucleophile in the catalytic mechanism. Ser-230 carries the phosphoserine modification.

It belongs to the peptidase T1B family. The 26S proteasome consists of a 20S proteasome core and two 19S regulatory subunits. The 20S proteasome core is composed of 28 subunits that are arranged in four stacked rings, resulting in a barrel-shaped structure. The two end rings are each formed by seven alpha subunits, and the two central rings are each formed by seven beta subunits. The catalytic chamber with the active sites is on the inside of the barrel. Component of the immunoproteasome, where it displaces the equivalent housekeeping subunit PSMB7. Component of the spermatoproteasome, a form of the proteasome specifically found in testis. Autocleaved. The resulting N-terminal Thr residue of the mature subunit is responsible for the nucleophile proteolytic activity.

It localises to the cytoplasm. The protein localises to the nucleus. The enzyme catalyses Cleavage of peptide bonds with very broad specificity.. Its function is as follows. The proteasome is a multicatalytic proteinase complex which is characterized by its ability to cleave peptides with Arg, Phe, Tyr, Leu, and Glu adjacent to the leaving group at neutral or slightly basic pH. The proteasome has an ATP-dependent proteolytic activity. This subunit is involved in antigen processing to generate class I binding peptides. This chain is Proteasome subunit beta type-10 (Psmb10), found in Rattus norvegicus (Rat).